A 196-amino-acid chain; its full sequence is ATP-dependent Clp protease proteolytic subunit (196 aa).

Ser101 functions as the Nucleophile in the catalytic mechanism. His126 is a catalytic residue.

The protein belongs to the peptidase S14 family. In terms of assembly, component of the chloroplastic Clp protease core complex.

The protein resides in the plastid. The protein localises to the chloroplast stroma. It carries out the reaction Hydrolysis of proteins to small peptides in the presence of ATP and magnesium. alpha-casein is the usual test substrate. In the absence of ATP, only oligopeptides shorter than five residues are hydrolyzed (such as succinyl-Leu-Tyr-|-NHMec, and Leu-Tyr-Leu-|-Tyr-Trp, in which cleavage of the -Tyr-|-Leu- and -Tyr-|-Trp bonds also occurs).. Its function is as follows. Cleaves peptides in various proteins in a process that requires ATP hydrolysis. Has a chymotrypsin-like activity. Plays a major role in the degradation of misfolded proteins. This chain is ATP-dependent Clp protease proteolytic subunit, found in Morus indica (Mulberry).